We begin with the raw amino-acid sequence, 247 residues long: Cell division protein ZapD (247 aa).

It belongs to the ZapD family. Interacts with FtsZ.

Its subcellular location is the cytoplasm. Its function is as follows. Cell division factor that enhances FtsZ-ring assembly. Directly interacts with FtsZ and promotes bundling of FtsZ protofilaments, with a reduction in FtsZ GTPase activity. In Shigella sonnei (strain Ss046), this protein is Cell division protein ZapD.